Here is a 40-residue protein sequence, read N- to C-terminus: Photosystem II reaction center protein J (40 aa).

A helical transmembrane segment spans residues 8-28 (IPLWLVGTVTGTLVIGLMGIF).

This sequence belongs to the PsbJ family. As to quaternary structure, PSII is composed of 1 copy each of membrane proteins PsbA, PsbB, PsbC, PsbD, PsbE, PsbF, PsbH, PsbI, PsbJ, PsbK, PsbL, PsbM, PsbT, PsbX, PsbY, PsbZ, Psb30/Ycf12, at least 3 peripheral proteins of the oxygen-evolving complex and a large number of cofactors. It forms dimeric complexes.

Its subcellular location is the plastid. The protein localises to the chloroplast thylakoid membrane. Functionally, one of the components of the core complex of photosystem II (PSII). PSII is a light-driven water:plastoquinone oxidoreductase that uses light energy to abstract electrons from H(2)O, generating O(2) and a proton gradient subsequently used for ATP formation. It consists of a core antenna complex that captures photons, and an electron transfer chain that converts photonic excitation into a charge separation. This is Photosystem II reaction center protein J from Psilotum nudum (Whisk fern).